Here is a 675-residue protein sequence, read N- to C-terminus: MELSLSTSSASPAVLRRQASPLLHKQQVLGVSFASALKPGGGALRFPSRRPLPRPITCSASPSTAEPASEVKKKQLDRRDNVRNIAIVAHVDHGKTTLVDSMLRQAKVFRDNQVMQERIMDSNDLERERGITILSKNTSITYKNTKVNIIDTPGHSDFGGEVERVLNMVDGVLLVVDSVEGPMPQTRFVLKKALEFGHAVVVVVNKIDRPSARPEFVVNSTFELFIELNATDEQCDFQAIYASGIKGKAGLSPDDLAEDLGPLFEAIIRCVPGPNIEKDGALQMLATNIEYDEHKGRIAIGRLHAGVLRKGMDVRVCTSEDSCRFARVSELFVYEKFYRVPTDSVEAGDICAVCGIDNIQIGETIADKVHGKPLPTIKVEEPTVKMSFSVNTSPFSGREGKYVTSRNLRDRLNRELERNLAMKVEDGETADTFIVSGRGTLHITILIENMRREGYEFMVGPPKVINKRVNDKLLEPYEIATVEVPEAHMGPVVELLGKRRGQMFDMQGVGSEGTTFLRYKIPTRGLLGLRNAILTASRGTAILNTVFDSYGPWAGDISTRDLGSLVAFEDGTSTSYALASAQERGQMFVGSGVDVYKGQIVGIHQRPGDLGLNICKKKAATNIRSNKDVTVILDTPLTYSLDDCIEYIEEDELVEVTPSSIRMCKNQKMAKKGRQ.

A chloroplast-targeting transit peptide spans 1–58; that stretch reads MELSLSTSSASPAVLRRQASPLLHKQQVLGVSFASALKPGGGALRFPSRRPLPRPITC. Residues 43-76 form a disordered region; the sequence is ALRFPSRRPLPRPITCSASPSTAEPASEVKKKQL. The segment covering 59-68 has biased composition (low complexity); that stretch reads SASPSTAEPA. One can recognise a tr-type G domain in the interval 80 to 275; sequence DNVRNIAIVA…AIIRCVPGPN (196 aa).

It belongs to the TRAFAC class translation factor GTPase superfamily. Classic translation factor GTPase family. BipA subfamily.

The protein localises to the plastid. The protein resides in the chloroplast. Putative chloroplastic elongation factor involved in response to chilling stress. Required for proper chloroplast rRNA processing and/or translation at low temperature. Involved in plastid protein homeostasis. This Arabidopsis thaliana (Mouse-ear cress) protein is Putative elongation factor TypA-like SVR3, chloroplastic (SVR3).